Consider the following 316-residue polypeptide: Probable cell division protein WhiA (316 aa).

Residues 275–309 (TLKELGEMVSSGKISKSGINHRLRKLDEIAEQLRS) constitute a DNA-binding region (H-T-H motif).

The protein belongs to the WhiA family.

Its function is as follows. Involved in cell division and chromosome segregation. The polypeptide is Probable cell division protein WhiA (Bacillus licheniformis (strain ATCC 14580 / DSM 13 / JCM 2505 / CCUG 7422 / NBRC 12200 / NCIMB 9375 / NCTC 10341 / NRRL NRS-1264 / Gibson 46)).